A 437-amino-acid polypeptide reads, in one-letter code: GTPase Obg (437 aa).

An Obg domain is found at 2 to 160; that stretch reads SMFLDTAKIS…RELQLELKIL (159 aa). The OBG-type G domain maps to 161-338; sequence ADVGLVGFPS…LMDATAELLA (178 aa). Residues 167–174, 192–196, 214–217, 284–287, and 319–321 contribute to the GTP site; these read GFPSVGKS, FTTIV, DLPG, NKMD, and SSL. Mg(2+) is bound by residues Ser-174 and Thr-194. One can recognise an OCT domain in the interval 359–437; it reads GFNEDERPFE…IGNFEFEFVD (79 aa).

Belongs to the TRAFAC class OBG-HflX-like GTPase superfamily. OBG GTPase family. As to quaternary structure, monomer. Mg(2+) serves as cofactor.

Its subcellular location is the cytoplasm. Its function is as follows. An essential GTPase which binds GTP, GDP and possibly (p)ppGpp with moderate affinity, with high nucleotide exchange rates and a fairly low GTP hydrolysis rate. Plays a role in control of the cell cycle, stress response, ribosome biogenesis and in those bacteria that undergo differentiation, in morphogenesis control. In Streptococcus agalactiae serotype Ia (strain ATCC 27591 / A909 / CDC SS700), this protein is GTPase Obg.